Here is a 64-residue protein sequence, read N- to C-terminus: Cytochrome b-c1 complex subunit 9 (64 aa).

Topologically, residues 2-18 (SSPTIPSRLYSLLFRRT) are mitochondrial matrix. A helical transmembrane segment spans residues 19–43 (STFALTIAVGALFFERAFDQGADAI). The Mitochondrial intermembrane portion of the chain corresponds to 44 to 63 (YEHINEGKLWKHIKHKYENK).

The protein belongs to the UQCR10/QCR9 family. In terms of assembly, component of the ubiquinol-cytochrome c oxidoreductase (cytochrome b-c1 complex, complex III, CIII), a multisubunit enzyme composed of 11 subunits. The complex is composed of 3 respiratory subunits cytochrome b, cytochrome c1 and Rieske protein UQCRFS1, 2 core protein subunits UQCRC1/QCR1 and UQCRC2/QCR2, and 6 low-molecular weight protein subunits UQCRH/QCR6, UQCRB/QCR7, UQCRQ/QCR8, UQCR10/QCR9, UQCR11/QCR10 and subunit 9, the cleavage product of Rieske protein UQCRFS1. The complex exists as an obligatory dimer and forms supercomplexes (SCs) in the inner mitochondrial membrane with NADH-ubiquinone oxidoreductase (complex I, CI) and cytochrome c oxidase (complex IV, CIV), resulting in different assemblies (supercomplex SCI(1)III(2)IV(1) and megacomplex MCI(2)III(2)IV(2)). Interacts with STMP1.

Its subcellular location is the mitochondrion inner membrane. In terms of biological role, component of the ubiquinol-cytochrome c oxidoreductase, a multisubunit transmembrane complex that is part of the mitochondrial electron transport chain which drives oxidative phosphorylation. The respiratory chain contains 3 multisubunit complexes succinate dehydrogenase (complex II, CII), ubiquinol-cytochrome c oxidoreductase (cytochrome b-c1 complex, complex III, CIII) and cytochrome c oxidase (complex IV, CIV), that cooperate to transfer electrons derived from NADH and succinate to molecular oxygen, creating an electrochemical gradient over the inner membrane that drives transmembrane transport and the ATP synthase. The cytochrome b-c1 complex catalyzes electron transfer from ubiquinol to cytochrome c, linking this redox reaction to translocation of protons across the mitochondrial inner membrane, with protons being carried across the membrane as hydrogens on the quinol. In the process called Q cycle, 2 protons are consumed from the matrix, 4 protons are released into the intermembrane space and 2 electrons are passed to cytochrome c. The protein is Cytochrome b-c1 complex subunit 9 (Uqcr10) of Mus musculus (Mouse).